The following is a 390-amino-acid chain: Probable L-tyrosine/L-aspartate decarboxylase (390 aa).

The residue at position 239 (K239) is an N6-(pyridoxal phosphate)lysine.

This sequence belongs to the group II decarboxylase family. MfnA subfamily. It depends on pyridoxal 5'-phosphate as a cofactor.

It carries out the reaction L-tyrosine + H(+) = tyramine + CO2. It catalyses the reaction L-aspartate + H(+) = beta-alanine + CO2. Its pathway is cofactor biosynthesis; methanofuran biosynthesis. The protein operates within cofactor biosynthesis; coenzyme A biosynthesis. Catalyzes the decarboxylation of L-tyrosine to produce tyramine for methanofuran biosynthesis. Can also catalyze the decarboxylation of L-aspartate to produce beta-alanine for coenzyme A (CoA) biosynthesis. This chain is Probable L-tyrosine/L-aspartate decarboxylase, found in Methanococcus aeolicus (strain ATCC BAA-1280 / DSM 17508 / OCM 812 / Nankai-3).